Reading from the N-terminus, the 318-residue chain is Ankyrin repeat and SOCS box protein 7 (318 aa).

ANK repeat units lie at residues 13–42 (QEELQIQAAVAAGDVHTVRKMLEQGYSPNG), 46–75 (NGWTLLHFSAARGKERCVRVFLEHGADPTV), 80–109 (GGFTALHYAAMHGRARIARLMLESEYRSDI), 116–145 (DGWTPLHVAAHYGRDSFVRLLLEFKAEVDP), 149–178 (KGTTPLQLAIIRERSSCVKILLDHNANIDI), 180–208 (NGFLLRYAVIKSNHSYCRMFLQRGADTNL), and 213–242 (DGQTPLHLSALRDDVLCARMLYNYGADTNT). The region spanning 265–318 (LDFLQDVTRQPRTLQDLCRIKIRQCIGLQNLKLLDELPIAKVMKDYLKHKFDDI) is the SOCS box domain.

It belongs to the ankyrin SOCS box (ASB) family. Interacts with CUL5. Interacts with RNF7. Interacts with PSRC1.

It is found in the nucleus. Its subcellular location is the cytoplasm. It functions in the pathway protein modification; protein ubiquitination. Functionally, probable substrate-recognition component of a SCF-like ECS (Elongin-Cullin-SOCS-box protein) E3 ubiquitin-protein ligase complex which mediates the ubiquitination and subsequent proteasomal degradation of target proteins. Plays a role in spindle dynamics and genome integrity by targeting the mitotic progression protein PSRC1 for proteasomal degradation in a cell cycle-dependent manner. Also participates in meiosis by mediating the proper attachment between kinetochores and microtubules. In Mus musculus (Mouse), this protein is Ankyrin repeat and SOCS box protein 7 (Asb7).